The primary structure comprises 317 residues: Ribose-phosphate pyrophosphokinase (317 aa).

ATP is bound by residues 41–43 and 100–101; these read DME and RQ. The Mg(2+) site is built by histidine 134 and aspartate 174. Lysine 197 is a catalytic residue. D-ribose 5-phosphate contacts are provided by residues arginine 199, aspartate 223, and 227–231; that span reads DSGGT.

The protein belongs to the ribose-phosphate pyrophosphokinase family. Class I subfamily. In terms of assembly, homohexamer. The cofactor is Mg(2+).

The protein resides in the cytoplasm. The catalysed reaction is D-ribose 5-phosphate + ATP = 5-phospho-alpha-D-ribose 1-diphosphate + AMP + H(+). It functions in the pathway metabolic intermediate biosynthesis; 5-phospho-alpha-D-ribose 1-diphosphate biosynthesis; 5-phospho-alpha-D-ribose 1-diphosphate from D-ribose 5-phosphate (route I): step 1/1. In terms of biological role, involved in the biosynthesis of the central metabolite phospho-alpha-D-ribosyl-1-pyrophosphate (PRPP) via the transfer of pyrophosphoryl group from ATP to 1-hydroxyl of ribose-5-phosphate (Rib-5-P). The polypeptide is Ribose-phosphate pyrophosphokinase (Bradyrhizobium diazoefficiens (strain JCM 10833 / BCRC 13528 / IAM 13628 / NBRC 14792 / USDA 110)).